A 198-amino-acid polypeptide reads, in one-letter code: tRNA (pseudouridine(54)-N(1))-methyltransferase (198 aa).

S-adenosyl-L-methionine is bound by residues leucine 130, glycine 153, 176-181 (LSPLEL), and cysteine 186.

It belongs to the methyltransferase superfamily. TrmY family. Homodimer.

It localises to the cytoplasm. It catalyses the reaction pseudouridine(54) in tRNA + S-adenosyl-L-methionine = N(1)-methylpseudouridine(54) in tRNA + S-adenosyl-L-homocysteine + H(+). Its function is as follows. Specifically catalyzes the N1-methylation of pseudouridine at position 54 (Psi54) in tRNAs. In Methanococcus maripaludis (strain C7 / ATCC BAA-1331), this protein is tRNA (pseudouridine(54)-N(1))-methyltransferase.